The chain runs to 95 residues: Aspartyl/glutamyl-tRNA(Asn/Gln) amidotransferase subunit C (95 aa).

Belongs to the GatC family. As to quaternary structure, heterotrimer of A, B and C subunits.

The enzyme catalyses L-glutamyl-tRNA(Gln) + L-glutamine + ATP + H2O = L-glutaminyl-tRNA(Gln) + L-glutamate + ADP + phosphate + H(+). It catalyses the reaction L-aspartyl-tRNA(Asn) + L-glutamine + ATP + H2O = L-asparaginyl-tRNA(Asn) + L-glutamate + ADP + phosphate + 2 H(+). Its function is as follows. Allows the formation of correctly charged Asn-tRNA(Asn) or Gln-tRNA(Gln) through the transamidation of misacylated Asp-tRNA(Asn) or Glu-tRNA(Gln) in organisms which lack either or both of asparaginyl-tRNA or glutaminyl-tRNA synthetases. The reaction takes place in the presence of glutamine and ATP through an activated phospho-Asp-tRNA(Asn) or phospho-Glu-tRNA(Gln). The sequence is that of Aspartyl/glutamyl-tRNA(Asn/Gln) amidotransferase subunit C from Desulforapulum autotrophicum (strain ATCC 43914 / DSM 3382 / VKM B-1955 / HRM2) (Desulfobacterium autotrophicum).